The chain runs to 120 residues: MFLLYEYDIFWAFLIISSAIPILAFLISGVLAPIRKGPEKLSSYESGIEPMGDAWLQFRIRYYMFALVFVVLDVETVFLYPWAMSFDVLGVPVFIEAFIFVLILIVGSVYAWRKGALEWS.

Transmembrane regions (helical) follow at residues isoleucine 9–glycine 29, methionine 64–methionine 84, and valine 88–serine 108.

This sequence belongs to the complex I subunit 3 family. In terms of assembly, NDH is composed of at least 16 different subunits, 5 of which are encoded in the nucleus.

It localises to the plastid. Its subcellular location is the chloroplast thylakoid membrane. It carries out the reaction a plastoquinone + NADH + (n+1) H(+)(in) = a plastoquinol + NAD(+) + n H(+)(out). The catalysed reaction is a plastoquinone + NADPH + (n+1) H(+)(in) = a plastoquinol + NADP(+) + n H(+)(out). NDH shuttles electrons from NAD(P)H:plastoquinone, via FMN and iron-sulfur (Fe-S) centers, to quinones in the photosynthetic chain and possibly in a chloroplast respiratory chain. The immediate electron acceptor for the enzyme in this species is believed to be plastoquinone. Couples the redox reaction to proton translocation, and thus conserves the redox energy in a proton gradient. This is NAD(P)H-quinone oxidoreductase subunit 3, chloroplastic from Gossypium barbadense (Sea Island cotton).